The primary structure comprises 415 residues: Leucine-rich repeat-containing protein 34 (415 aa).

LRR repeat units lie at residues 246-272 and 274-296; these read TLRY…LKSN and TLEV…LSET.

In terms of assembly, interacts with NPM1 and NCL.

Its subcellular location is the nucleus. It localises to the nucleolus. The protein resides in the cytoplasm. Functionally, highly expressed in stem cells where it may be involved in regulation of pluripotency. In embryonic stem cells (ESCs), important for normal expression of the pluripotency regulators POU5F1/OCT4 and KLF4. Also important for expression of the ectodermal marker gene NES and the endodermal marker gene GATA4. Promotes stem cell proliferation in vitro. The sequence is that of Leucine-rich repeat-containing protein 34 (Lrrc34) from Rattus norvegicus (Rat).